A 309-amino-acid polypeptide reads, in one-letter code: Phosphoserine phosphatase (309 aa).

Residue D97 is the Nucleophile of the active site. D97 and D99 together coordinate Mg(2+). D99 acts as the Proton donor in catalysis. Residues E106, R142, 186–187, and K232 each bind substrate; that span reads SG. A Mg(2+)-binding site is contributed by D255. N258 serves as a coordination point for substrate.

Belongs to the HAD-like hydrolase superfamily. SerB family. Mg(2+) serves as cofactor.

It catalyses the reaction O-phospho-L-serine + H2O = L-serine + phosphate. The enzyme catalyses O-phospho-D-serine + H2O = D-serine + phosphate. Its pathway is amino-acid biosynthesis; L-serine biosynthesis; L-serine from 3-phospho-D-glycerate: step 3/3. This chain is Phosphoserine phosphatase (SER2), found in Saccharomyces cerevisiae (strain ATCC 204508 / S288c) (Baker's yeast).